A 414-amino-acid chain; its full sequence is Ceramide synthase 5 (414 aa).

Topologically, residues 1–43 (MATAAAETLGLLWGWLWSESFWLPQNVSWADLEGPGDGYGYPR) are lumenal. A glycan (N-linked (GlcNAc...) asparagine) is linked at Asn26. A helical membrane pass occupies residues 44-64 (AQHVLSVFPLAVCIFSVRMLF). The segment at 75–136 (RVGIKDSPVN…RHRRNQDKPP (62 aa)) is homeobox-like. The 202-residue stretch at 139–340 (TKFCESMWRF…IVQTASKALS (202 aa)) folds into the TLC domain. The next 4 membrane-spanning stretches (helical) occupy residues 148 to 168 (FTYY…MPWF), 187 to 207 (LYYY…SQFI), 214 to 234 (FLMM…SYVN), and 272 to 292 (LFVI…PLWI). The Last loop motif signature appears at 299-309 (ESWEIIGPYPS). A helical transmembrane segment spans residues 312-332 (LFNALLLILQVLHAIWSYLIV). Over 333-414 (QTASKALSRG…RASPHLHSCD (82 aa)) the chain is Cytoplasmic. The tract at residues 347–373 (DDRSDVESSSEEEDETTHKNNLSGSSS) is disordered.

In terms of assembly, interacts with PAQR4; the interaction regulates the stability and activity of CERS5 and is inhibited in presence of ceramides. Post-translationally, phosphorylated at the C-terminus by CK2. Ubiquitously expressed, with highest levels in testis and kidney. Expressed in pulmonary epithelia.

The protein localises to the endoplasmic reticulum membrane. The catalysed reaction is a sphingoid base + hexadecanoyl-CoA = an N-hexadecanoyl-sphingoid base + CoA + H(+). The enzyme catalyses sphinganine + hexadecanoyl-CoA = N-hexadecanoylsphinganine + CoA + H(+). It catalyses the reaction hexadecasphinganine + hexadecanoyl-CoA = N-hexadecanoylhexadecasphinganine + CoA + H(+). It carries out the reaction sphing-4-enine + hexadecanoyl-CoA = N-hexadecanoylsphing-4-enine + CoA + H(+). The catalysed reaction is 2-hydroxyhexadecanoyl-CoA + sphinganine = N-(2-hydroxyhexadecanoyl)-sphinganine + CoA + H(+). The enzyme catalyses sphinganine + tetradecanoyl-CoA = N-(tetradecanoyl)-sphinganine + CoA + H(+). It catalyses the reaction sphinganine + octadecanoyl-CoA = N-(octadecanoyl)-sphinganine + CoA + H(+). It carries out the reaction sphinganine + (9Z)-octadecenoyl-CoA = N-(9Z-octadecenoyl)-sphinganine + CoA + H(+). The catalysed reaction is a fatty acyl-CoA + sphing-4-enine = an N-acylsphing-4-enine + CoA + H(+). The enzyme catalyses tetracosenoyl-CoA + sphing-4-enine = N-(tetracosenoyl)-sphing-4-enine + CoA + H(+). Its pathway is lipid metabolism; sphingolipid metabolism. Its activity is regulated as follows. Inhibited by fumonisin B1. Functionally, ceramide synthase that catalyzes the transfer of the acyl chain from acyl-CoA to a sphingoid base, with high selectivity toward palmitoyl-CoA (hexadecanoyl-CoA; C16:0-CoA). Can use other acyl donors, but with less efficiency. N-acylates sphinganine and sphingosine bases to form dihydroceramides and ceramides in de novo synthesis and salvage pathways, respectively. Plays a role in de novo ceramide synthesis and surfactant homeostasis in pulmonary epithelia. The chain is Ceramide synthase 5 from Mus musculus (Mouse).